The sequence spans 301 residues: Sulfate adenylyltransferase subunit 2 (301 aa).

The protein belongs to the PAPS reductase family. CysD subfamily. In terms of assembly, heterodimer composed of CysD, the smaller subunit, and CysN.

The enzyme catalyses sulfate + ATP + H(+) = adenosine 5'-phosphosulfate + diphosphate. It participates in sulfur metabolism; hydrogen sulfide biosynthesis; sulfite from sulfate: step 1/3. Its function is as follows. With CysN forms the ATP sulfurylase (ATPS) that catalyzes the adenylation of sulfate producing adenosine 5'-phosphosulfate (APS) and diphosphate, the first enzymatic step in sulfur assimilation pathway. APS synthesis involves the formation of a high-energy phosphoric-sulfuric acid anhydride bond driven by GTP hydrolysis by CysN coupled to ATP hydrolysis by CysD. The sequence is that of Sulfate adenylyltransferase subunit 2 from Trichlorobacter lovleyi (strain ATCC BAA-1151 / DSM 17278 / SZ) (Geobacter lovleyi).